The chain runs to 352 residues: MKIYFLLGTFLTFLLHTRICQGIKWLALSKTPLSLPLNQTQHCKQLEGLVSSQMQLCRSNLELMQTIIHAAKEVKKTCVKAFTDMRWNCSSIELAPTFHQDLERGTRESAFVHALSAAAISHTIARACTTGDIPGCSCAPIPGESPGPGYRWGGCADNLNYGILMGSKFSDAPMKMKKSGSQANKLMHLHNSEVGRQVLKASLEMKCKCHGVSGSCSIKTCWRGLQELREIALDLKTKYLSATKVVHRPMGTRKHLVPKDIDIRPVQETELIYLQSSPDYCLKNEKIGSHGTHERQCNKTSNGSDSCDLMCCGRGYNPYMDKVVERCLCKYHWCCYVTCKKCERTVERYVCK.

A signal peptide spans 1–22 (MKIYFLLGTFLTFLLHTRICQG). Residues N38 and N88 are each glycosylated (N-linked (GlcNAc...) asparagine). 5 disulfide bridges follow: C78–C89, C128–C136, C138–C155, C207–C221, and C209–C216. S213 is lipidated: O-palmitoleoyl serine; by PORCN. Y273 and Y280 each carry sulfotyrosine. 6 cysteine pairs are disulfide-bonded: C281-C312, C297-C307, C311-C351, C327-C342, C329-C339, and C334-C335. A glycan (N-linked (GlcNAc...) asparagine) is linked at N298.

It belongs to the Wnt family. Glycosylation is required for protein secretion. Post-translationally, palmitoleoylation is required for efficient binding to frizzled receptors. Depalmitoleoylation leads to Wnt signaling pathway inhibition. As to expression, in embryos, expressed in the neural tube, dorsal somite, mesenchymal cells within the dorsal fin, branchial arches and heart muscle, becoming expressed throughout the myocardium by the tadpole stage (stage 45). Prior to neural crest cell migration, expressed in a domain flanking the neural crest on the medial or neural (the opposite side to wnt11b). Weakly expressed in the developing pronephros from stage 25, with expression increasing from stages 30 to 35.

Its subcellular location is the secreted. The protein localises to the extracellular space. The protein resides in the extracellular matrix. Ligand for members of the frizzled family of seven transmembrane receptors. Shares much functionality with wnt11b. Signals through a non-canonical Wnt pathway to activate Jun-N-terminal kinase (JNK) to regulate gastrulation movements. Acts in a non-cell-autonomous manner to control neural crest migration, probably acting as an extracellular signal from surrounding tissue, but is not required for neural crest induction. Acts redundantly with wnt11b during pronephros induction. Regulates cardiac morphogenesis through the activation of JNK, but is not required for cardiac differentiation. Essential for dorsal fin development; required for an epithelial to mesenchymal transformation event prior to migration of cells into the fin, and ultimately for maintenance of fin structure. Mediates dorsal fin development through a non-canonical pathway mediated by Ca(2+). The sequence is that of Protein Wnt-11 from Xenopus laevis (African clawed frog).